Consider the following 339-residue polypeptide: Glycerol-3-phosphate dehydrogenase [NAD(P)+] (339 aa).

The NADPH site is built by serine 15, tyrosine 16, histidine 36, and lysine 110. Sn-glycerol 3-phosphate contacts are provided by lysine 110, glycine 139, and threonine 141. Alanine 143 contributes to the NADPH binding site. Lysine 195, aspartate 248, serine 258, arginine 259, and asparagine 260 together coordinate sn-glycerol 3-phosphate. Residue lysine 195 is the Proton acceptor of the active site. Residue arginine 259 coordinates NADPH. NADPH-binding residues include valine 283 and glutamate 285.

The protein belongs to the NAD-dependent glycerol-3-phosphate dehydrogenase family.

It is found in the cytoplasm. The enzyme catalyses sn-glycerol 3-phosphate + NAD(+) = dihydroxyacetone phosphate + NADH + H(+). The catalysed reaction is sn-glycerol 3-phosphate + NADP(+) = dihydroxyacetone phosphate + NADPH + H(+). Its pathway is membrane lipid metabolism; glycerophospholipid metabolism. In terms of biological role, catalyzes the reduction of the glycolytic intermediate dihydroxyacetone phosphate (DHAP) to sn-glycerol 3-phosphate (G3P), the key precursor for phospholipid synthesis. This chain is Glycerol-3-phosphate dehydrogenase [NAD(P)+], found in Salmonella agona (strain SL483).